Reading from the N-terminus, the 32-residue chain is MGNEFIASASISFIITLIGLTLGFALLKLQGE.

The chain crosses the membrane as a helical span at residues 5 to 25 (FIASASISFIITLIGLTLGFA).

Belongs to the PetM family. The 4 large subunits of the cytochrome b6-f complex are cytochrome b6, subunit IV (17 kDa polypeptide, PetD), cytochrome f and the Rieske protein, while the 4 small subunits are PetG, PetL, PetM and PetN. The complex functions as a dimer.

It is found in the plastid. Its subcellular location is the chloroplast thylakoid membrane. Functionally, component of the cytochrome b6-f complex, which mediates electron transfer between photosystem II (PSII) and photosystem I (PSI), cyclic electron flow around PSI, and state transitions. The chain is Cytochrome b6-f complex subunit 7 from Guillardia theta (Cryptophyte).